Reading from the N-terminus, the 346-residue chain is Actin-like protein 10 (346 aa).

This sequence belongs to the actin family.

The protein is Actin-like protein 10 (Actl10) of Mus musculus (Mouse).